Consider the following 351-residue polypeptide: MKAVTVIPLVKDSLALRDMPKPSPKRYQVLLSPIEVGVCGTDKDIIEGRYGAPPPGEEYLILGHESVAEVVELGDDVDNVSVGDIVVPTVRRPTTCTLPITEVDYCPRGTYAEHGIWYLHGFATEFAVTDSQYLVKVPKEAIDVAVLTEPLSIVEKGIDLALRLGKARFESWSPRRVLIMGAGPIGMLALMVMRLRDFADITVTATRPYDSLKAKLVREIGATYVNTNIDQINGDFDIVIEATGSTSAAYDALRHLGADGVAVLLGIYLDSKNVNIRPLLDDWRRNKLIIGATNASIGAFEMGVADLVKAKFEFGGWVRKLITKEVTLDEYEYAYNWGHEDIKSVIQIRSL.

Residue Cys-39 participates in Zn(2+) binding. A substrate-binding site is contributed by Thr-41. His-64 and Glu-65 together coordinate Zn(2+). Positions 113 and 149 each coordinate substrate. Residue Glu-149 participates in Zn(2+) binding. Residues 182–185 (AGPI), 265–267 (LGI), and 292–294 (ATN) each bind NADP(+). Asn-294 is a substrate binding site.

The protein belongs to the zinc-containing alcohol dehydrogenase family. Glucose 1-dehydrogenase subfamily. It depends on Zn(2+) as a cofactor.

It carries out the reaction D-glucose + NAD(+) = D-glucono-1,5-lactone + NADH + H(+). It catalyses the reaction D-glucose + NADP(+) = D-glucono-1,5-lactone + NADPH + H(+). Catalyzes the NAD(P)(+)-dependent oxidation of D-glucose to D-gluconate via gluconolactone. Can utilize both NAD(+) and NADP(+) as electron acceptor. Is involved in the degradation of glucose through a non-phosphorylative variant of the Entner-Doudoroff pathway. The protein is Glucose 1-dehydrogenase 1 of Vulcanisaeta moutnovskia (strain 768-28).